The following is a 149-amino-acid chain: Internal scaffolding protein ORF3 (149 aa).

It belongs to the microvidae B protein family.

The protein resides in the host cytoplasm. Functionally, participates in the assembly of the viral procapsid in the cytoplasm. Released from the procapsid upon genome packaging, possibly through affinity displacement by the protein ORF8, or by proteolysis. The chain is Internal scaffolding protein ORF3 from Spiroplasma virus 4 (SpV4).